Reading from the N-terminus, the 173-residue chain is Ribosome maturation factor RimM (173 aa).

Residues 94–166 (VQEEPYIDII…KIIVELPMGF (73 aa)) form the PRC barrel domain.

It belongs to the RimM family. Binds ribosomal protein uS19.

Its subcellular location is the cytoplasm. An accessory protein needed during the final step in the assembly of 30S ribosomal subunit, possibly for assembly of the head region. Essential for efficient processing of 16S rRNA. May be needed both before and after RbfA during the maturation of 16S rRNA. It has affinity for free ribosomal 30S subunits but not for 70S ribosomes. The polypeptide is Ribosome maturation factor RimM (Amoebophilus asiaticus (strain 5a2)).